Consider the following 296-residue polypeptide: Large ribosomal subunit protein uL18A (296 aa).

The interval 251–296 (PVHEKKPKKEVKKKRWNRAKLSLEQKKDRVAQKKASFLRAQEKADS) is disordered. A compositionally biased stretch (basic residues) spans 255-268 (KKPKKEVKKKRWNR). The segment covering 271 to 281 (LSLEQKKDRVA) has biased composition (basic and acidic residues).

This sequence belongs to the universal ribosomal protein uL18 family. In terms of assembly, component of the large ribosomal subunit (LSU). Part of a LSU subcomplex, the 5S RNP which is composed of the 5S RNA, RPL5 and RPL11.

The protein resides in the cytoplasm. It is found in the nucleus. Its subcellular location is the nucleolus. Functionally, component of the ribosome, a large ribonucleoprotein complex responsible for the synthesis of proteins in the cell. The small ribosomal subunit (SSU) binds messenger RNAs (mRNAs) and translates the encoded message by selecting cognate aminoacyl-transfer RNA (tRNA) molecules. The large subunit (LSU) contains the ribosomal catalytic site termed the peptidyl transferase center (PTC), which catalyzes the formation of peptide bonds, thereby polymerizing the amino acids delivered by tRNAs into a polypeptide chain. The nascent polypeptides leave the ribosome through a tunnel in the LSU and interact with protein factors that function in enzymatic processing, targeting, and the membrane insertion of nascent chains at the exit of the ribosomal tunnel. As part of the 5S RNP/5S ribonucleoprotein particle it is an essential component of the LSU, required for its formation and the maturation of rRNAs. It also couples ribosome biogenesis to p53/TP53 activation. As part of the 5S RNP it accumulates in the nucleoplasm and inhibits MDM2, when ribosome biogenesis is perturbed, mediating the stabilization and the activation of TP53. The polypeptide is Large ribosomal subunit protein uL18A (rpl5-a) (Xenopus laevis (African clawed frog)).